The chain runs to 209 residues: Kunitz trypsin inhibitor 1 (209 aa).

Residues 1–22 (MKATISITTIFLVVALAAPSLA) form the signal peptide. Cystine bridges form between Cys63–Cys107 and Cys154–Cys162. N-linked (GlcNAc...) asparagine glycosylation is present at Asn156.

This sequence belongs to the protease inhibitor I3 (leguminous Kunitz-type inhibitor) family.

Its function is as follows. Exhibits Kunitz trypsin protease inhibitor activity. The protein is Kunitz trypsin inhibitor 1 of Arabidopsis thaliana (Mouse-ear cress).